The chain runs to 548 residues: Cilia- and flagella-associated protein 97 (548 aa).

A phosphoserine mark is found at S8 and S19. 3 disordered regions span residues 85 to 297 (NYLT…RQEN), 407 to 431 (LSRQ…PPKL), and 497 to 548 (YSPL…LRSH). Residues 91–107 (GNERKPKFPSKEQHVEN) are compositionally biased toward basic and acidic residues. Positions 112–121 (TRSPSLLTSS) are enriched in low complexity. The span at 152-161 (DYYTDGEESS) shows a compositional bias: acidic residues. A Phosphothreonine modification is found at T155. S160 and S161 each carry phosphoserine. Residues 191 to 209 (KASSSSLSSSSSRSSSDCS) are compositionally biased toward low complexity. Positions 214 to 237 (DMQNKPDSGSSGKRVSSVTPSSPK) are enriched in polar residues. S235 bears the Phosphoserine mark. Residues 238–248 (QKCKSGRKSSA) show a composition bias toward basic residues. A Phosphoserine modification is found at S259. Residues 264 to 289 (TDVTPASTPDSSPAQPFELSQSQNQK) show a composition bias toward polar residues. Residues 383 to 460 (RKNYSFTREE…ALLKRLEAVK (78 aa)) are a coiled coil. Polar residues-rich tracts occupy residues 504-514 (SRTSSATSGLS) and 537-548 (IQCSNSKVLRSH).

Belongs to the CFAP97 family.

This Rattus norvegicus (Rat) protein is Cilia- and flagella-associated protein 97.